The sequence spans 291 residues: Acetyl-coenzyme A carboxylase carboxyl transferase subunit beta (291 aa).

The 263-residue stretch at 29-291 (IMTKCPQCKK…TGGEREWLEN (263 aa)) folds into the CoA carboxyltransferase N-terminal domain. 4 residues coordinate Zn(2+): C33, C36, C52, and C55. The C4-type zinc-finger motif lies at 33–55 (CPQCKKIMLTKELDKNLRVCMNC).

It belongs to the AccD/PCCB family. Acetyl-CoA carboxylase is a heterohexamer composed of biotin carboxyl carrier protein (AccB), biotin carboxylase (AccC) and two subunits each of ACCase subunit alpha (AccA) and ACCase subunit beta (AccD). Zn(2+) serves as cofactor.

The protein localises to the cytoplasm. It catalyses the reaction N(6)-carboxybiotinyl-L-lysyl-[protein] + acetyl-CoA = N(6)-biotinyl-L-lysyl-[protein] + malonyl-CoA. It functions in the pathway lipid metabolism; malonyl-CoA biosynthesis; malonyl-CoA from acetyl-CoA: step 1/1. Functionally, component of the acetyl coenzyme A carboxylase (ACC) complex. Biotin carboxylase (BC) catalyzes the carboxylation of biotin on its carrier protein (BCCP) and then the CO(2) group is transferred by the transcarboxylase to acetyl-CoA to form malonyl-CoA. In Bacillus pumilus (strain SAFR-032), this protein is Acetyl-coenzyme A carboxylase carboxyl transferase subunit beta.